A 1274-amino-acid chain; its full sequence is Paired amphipathic helix protein Sin3a (1274 aa).

Disordered stretches follow at residues 1 to 26 (MKRR…STEA) and 85 to 110 (HHHP…PPVA). Residue Ser-10 is modified to Phosphoserine. In terms of domain architecture, PAH 1 spans 119–189 (QRLKVEDALS…MGFNTFLPPG (71 aa)). The segment at 119–196 (QRLKVEDALS…PPGYKIEVQT (78 aa)) is interaction with HCFC1. Residues Lys-122 and Lys-134 each participate in a glycyl lysine isopeptide (Lys-Gly) (interchain with G-Cter in SUMO2) cross-link. Positions 205–297 (PGQVHQIPTH…ISLGTAPSLQ (93 aa)) are disordered. An interaction with REST region spans residues 205–479 (PGQVHQIPTH…KVRKALRSAE (275 aa)). Positions 228 to 237 (SQPSSQSAPT) are enriched in low complexity. Over residues 252–266 (KPSQLQAHTPASQQT) the composition is skewed to polar residues. Positions 267–282 (PPLPPYASPRSPPVQP) are enriched in pro residues. Residue Ser-277 is modified to Phosphoserine. A Phosphothreonine modification is found at Thr-284. The span at 284-297 (TPVTISLGTAPSLQ) shows a compositional bias: polar residues. Residues 300–383 (QPVEFNHAIN…SEFGQFLPDA (84 aa)) form the PAH 2 domain. Residues 398–443 (DSVRNDHGGTVKKPQLNNKPQRPSQNGCQIRRHSGTGATPPVKKKP) form a disordered region. Residues 412–425 (QLNNKPQRPSQNGC) are compositionally biased toward polar residues. Residues 457–526 (SKHGVGTESL…NWFKNFLGYK (70 aa)) enclose the PAH 3 domain. Residues 459–526 (HGVGTESLFF…NWFKNFLGYK (68 aa)) form an interaction with SAP30 region. The residue at position 470 (Lys-470) is an N6-acetyllysine. Positions 524 to 851 (GYKESVHLES…EMDVDEATGA (328 aa)) are interaction with NCOR1. The interactions with SUDS3 and SAP130 stretch occupies residues 525 to 660 (YKESVHLESF…KFRLDNTLGG (136 aa)). Lys-564 participates in a covalent cross-link: Glycyl lysine isopeptide (Lys-Gly) (interchain with G-Cter in SUMO2). The interactions with HDAC1 and ARID4B stretch occupies residues 688-830 (NPSIAVPIVL…IPDLLFAQRG (143 aa)). A Phosphoserine modification is found at Ser-833. The segment covering 835–847 (VEEEEEEEMDVDE) has biased composition (acidic residues). The tract at residues 835–865 (VEEEEEEEMDVDEATGAPKKHNGVGGSPPKS) is disordered. The residue at position 861 (Ser-861) is a Phosphoserine. 2 positions are modified to N6-acetyllysine: Lys-866 and Lys-876. The interval 889-968 (VNNNWYIFMR…YYPAFLDMVR (80 aa)) is interaction with OGT. Residues 904–933 (CLRLLRICSQAERQIEEENREREWEREVLG) adopt a coiled-coil conformation. A phosphoserine mark is found at Ser-941, Ser-1090, and Ser-1113. Residues 1137–1157 (CQRGREQQEKEGKEGNSKKTM) form a disordered region. Residues 1139-1157 (RGREQQEKEGKEGNSKKTM) are compositionally biased toward basic and acidic residues.

Interacts with ARID4B, BRMS1L, HCFC1, HDAC1, HDAC2, MXI1, SAP30L, SAP130, SFPQ and TOPORS. Interacts with OGT (via TPRs 1-6); the interaction mediates transcriptional repression in parallel with histone deacetylase. Interacts with BAZ2A, MXD1, MXD3, MXD4, MBD2, DACH1, NCOR1, NR4A2, REST, RLIM, SAP30, SETDB1, SMYD2, and SUDS3. Interacts with PHF12 in a complex composed of HDAC1, PHF12 and SAP30. Interacts with TET1; the interaction recruits SIN3A to gene promoters. The large PER complex involved in the histone deacetylation is composed of at least HDAC1, PER2, SFPQ and SIN3A. Interacts with KLF11. Interacts with PPHLN1. Found in a complex with YY1, GON4L and HDAC1. Interacts (via PAH2) with FOXK1. Interacts with FOXK2. Found in a complex composed of at least SINHCAF, SIN3A, HDAC1, SAP30, RBBP4, OGT and TET1. Interacts with SINHCAF. Interacts with SPHK2. SUMO1 sumoylated by TOPORS. Probably desumoylated by SENP2. Widely expressed. Highest levels in testis, lung and thymus. Expressed at relatively high levels throughout brain development. In adult mice, expression is high in neurogenic regions such as the subventricular zone, rostral migratory stream, olfactory bulb and dentate gyrus.

Its subcellular location is the nucleus. It localises to the nucleolus. Acts as a transcriptional repressor. Corepressor for REST. Interacts with MXI1 to repress MYC responsive genes and antagonize MYC oncogenic activities. Also interacts with MXD1-MAX heterodimers to repress transcription by tethering SIN3A to DNA. Acts cooperatively with OGT to repress transcription in parallel with histone deacetylation. Involved in the control of the circadian rhythms. Required for the transcriptional repression of circadian target genes, such as PER1, mediated by the large PER complex through histone deacetylation. Cooperates with FOXK1 to regulate cell cycle progression probably by repressing cell cycle inhibitor genes expression. Required for cortical neuron differentiation and callosal axon elongation. This chain is Paired amphipathic helix protein Sin3a (Sin3a), found in Mus musculus (Mouse).